Here is a 79-residue protein sequence, read N- to C-terminus: Large ribosomal subunit protein bL31 (79 aa).

Positions 16, 18, 37, and 40 each coordinate Zn(2+).

This sequence belongs to the bacterial ribosomal protein bL31 family. Type A subfamily. As to quaternary structure, part of the 50S ribosomal subunit. Zn(2+) is required as a cofactor.

Its function is as follows. Binds the 23S rRNA. This Coxiella burnetii (strain CbuG_Q212) (Coxiella burnetii (strain Q212)) protein is Large ribosomal subunit protein bL31.